The sequence spans 1220 residues: Limbin (1220 aa).

The signal sequence occupies residues 1–29 (MGATGPTGAGGRATWVLAGNILAAALVLG). At 30–210 (SGPRALPPSF…VLPNHGLHAA (181 aa)) the chain is on the extracellular side. The interval 38–59 (SFPALGPGSPSRPGPAGPWASS) is disordered. Residues Asn-100, Asn-109, and Asn-130 are each glycosylated (N-linked (GlcNAc...) asparagine). A helical membrane pass occupies residues 211–231 (GFIAAFLISLLLTVAALFFLA). At 232–1220 (RGRCLQGGML…KKANRALGLD (989 aa)) the chain is on the cytoplasmic side. Coiled coils occupy residues 355-404 (EEYE…SAAE), 563-644 (KQKL…AALD), 854-875 (GELL…AESL), and 920-1005 (QILE…VREE).

Component of the EvC complex composed of EFCAB7, IQCE, EVC2 and EVC; built from two subcomplexes, EVC2:EVC and EFCAB7:IQCE. Interacts with EVC. Interacts (via N-terminal end) with EFCAB7. Interacts (via N-terminal end) with IQCE. In terms of tissue distribution, expressed in long and cranial bones, kidney and heart. Strongly expressed in proliferating chondrocytes, osteoblasts and osteoclasts.

The protein localises to the cell membrane. It is found in the cytoplasm. It localises to the cytoskeleton. The protein resides in the cilium basal body. Its subcellular location is the cell projection. The protein localises to the cilium. It is found in the cilium membrane. It localises to the nucleus. Functionally, component of the EvC complex that positively regulates ciliary Hedgehog (Hh) signaling. Plays a critical role in bone formation and skeletal development. May be involved in early embryonic morphogenesis. This chain is Limbin (Evc2), found in Mus musculus (Mouse).